The primary structure comprises 91 residues: Elongation factor 1-beta (91 aa).

It belongs to the EF-1-beta/EF-1-delta family.

Functionally, promotes the exchange of GDP for GTP in EF-1-alpha/GDP, thus allowing the regeneration of EF-1-alpha/GTP that could then be used to form the ternary complex EF-1-alpha/GTP/AAtRNA. The sequence is that of Elongation factor 1-beta from Sulfurisphaera tokodaii (strain DSM 16993 / JCM 10545 / NBRC 100140 / 7) (Sulfolobus tokodaii).